The sequence spans 953 residues: Probable LRR receptor-like serine/threonine-protein kinase At1g53420 (953 aa).

Positions 1–22 are cleaved as a signal peptide; that stretch reads MSLNRFLFTSFSFFLFFIVHFA. Over 23-566 the chain is Extracellular; sequence SSATLPTQEG…SPRNGMSTGT (544 aa). LRR repeat units follow at residues 63-86, 88-110, 111-132, 135-158, 159-182, and 183-205; these read WSTI…LVGL, LLQE…WGVL, PLVN…EFGN, TLTS…GNLP, NIQQ…AKLT, and TLRD…IQKW. N-linked (GlcNAc...) asparagine glycosylation is found at N100 and N132. Residues N265, N315, N335, N378, and N423 are each glycosylated (N-linked (GlcNAc...) asparagine). Residues 567-587 traverse the membrane as a helical segment; sequence LHTLVVILSIFIVFLVFGTLW. The Cytoplasmic segment spans residues 588 to 953; sequence KKGYLRSKSQ…SDRSESSADH (366 aa). The Protein kinase domain occupies 624–901; the sequence is FDSANRIGEG…VKMLEGKKMV (278 aa). ATP is bound by residues 630–638 and K652; that span reads IGEGGFGPV. Y697 carries the phosphotyrosine modification. D750 acts as the Proton acceptor in catalysis. S783 carries the post-translational modification Phosphoserine. A phosphothreonine mark is found at T784 and T789. Residue Y797 is modified to Phosphotyrosine.

This sequence belongs to the protein kinase superfamily. Ser/Thr protein kinase family.

The protein resides in the membrane. It carries out the reaction L-seryl-[protein] + ATP = O-phospho-L-seryl-[protein] + ADP + H(+). It catalyses the reaction L-threonyl-[protein] + ATP = O-phospho-L-threonyl-[protein] + ADP + H(+). The polypeptide is Probable LRR receptor-like serine/threonine-protein kinase At1g53420 (Arabidopsis thaliana (Mouse-ear cress)).